Here is a 180-residue protein sequence, read N- to C-terminus: WPP domain-containing protein 2 (180 aa).

A compositionally biased stretch (low complexity) spans 1–26 (MAETAETINTTISSPPPESESSTTIS). 2 disordered regions span residues 1-61 (MAET…LRIW) and 140-180 (SVKA…KSEA). A compositionally biased stretch (polar residues) spans 27–36 (AMTDPTSQEA). Residues 37–53 (ASKDTDLTKEAESEKKP) show a composition bias toward basic and acidic residues. A WPP region spans residues 44-147 (TKEAESEKKP…LESVKARSNA (104 aa)). Phosphoserine is present on Ser-173.

Binds to FPP proteins. Interacts with WAP, WIP1, WIP2 and WIP3 through its WPP domain. Interacts with WIT1 and HSP70-1. Expressed in roots, stems, leaves and flowers.

It is found in the nucleus envelope. It localises to the cytoplasm. The protein localises to the nucleus. Its subcellular location is the golgi apparatus. Its function is as follows. Regulates the mitotic activity in roots. Plays a role with HSP70-1 in facilitating WIT1 nuclear envelope targeting. In Arabidopsis thaliana (Mouse-ear cress), this protein is WPP domain-containing protein 2 (WPP2).